The primary structure comprises 109 residues: MLVGSQLIEIVIDSLRYENLKEILDEMFRDEVQKLKYFLEDVKEEDEELYNKIVDALKLFKENYEIEDIKIPKKIRVFLVKNNILFLNPQKGSLKPQSYLVWNAIKMLL.

Belongs to the archaeal ATPase family.

This is an uncharacterized protein from Methanocaldococcus jannaschii (strain ATCC 43067 / DSM 2661 / JAL-1 / JCM 10045 / NBRC 100440) (Methanococcus jannaschii).